The following is a 348-amino-acid chain: 3-isopropylmalate dehydrogenase (348 aa).

76 to 87 (GPKWTDPNNRPE) is a binding site for NAD(+). Substrate-binding residues include Arg-94, Arg-104, Arg-132, and Asp-217. Residues Asp-217, Asp-241, and Asp-245 each contribute to the Mg(2+) site. 275 to 287 (GSAPDIAGKNVAN) contributes to the NAD(+) binding site.

It belongs to the isocitrate and isopropylmalate dehydrogenases family. LeuB type 1 subfamily. Homodimer. The cofactor is Mg(2+). It depends on Mn(2+) as a cofactor.

Its subcellular location is the cytoplasm. It catalyses the reaction (2R,3S)-3-isopropylmalate + NAD(+) = 4-methyl-2-oxopentanoate + CO2 + NADH. It participates in amino-acid biosynthesis; L-leucine biosynthesis; L-leucine from 3-methyl-2-oxobutanoate: step 3/4. In terms of biological role, catalyzes the oxidation of 3-carboxy-2-hydroxy-4-methylpentanoate (3-isopropylmalate) to 3-carboxy-4-methyl-2-oxopentanoate. The product decarboxylates to 4-methyl-2 oxopentanoate. This Staphylococcus aureus (strain bovine RF122 / ET3-1) protein is 3-isopropylmalate dehydrogenase.